A 114-amino-acid chain; its full sequence is Large ribosomal subunit protein bL20 (114 aa).

This sequence belongs to the bacterial ribosomal protein bL20 family.

Its function is as follows. Binds directly to 23S ribosomal RNA and is necessary for the in vitro assembly process of the 50S ribosomal subunit. It is not involved in the protein synthesizing functions of that subunit. This chain is Large ribosomal subunit protein bL20, found in Anaeromyxobacter sp. (strain Fw109-5).